The chain runs to 379 residues: Origin of replication complex subunit 2 (379 aa).

Residues methionine 1 to alanine 25 form a disordered region. Over residues alanine 8–glycine 17 the composition is skewed to low complexity.

This sequence belongs to the ORC2 family. Component of the origin recognition complex (ORC) composed of at least ORC1, ORC2, ORC3, ORC4, ORC5 and ORC6. ORC is regulated in a cell-cycle and development dependent manner. It is sequentially assembled at the exit from anaphase of mitosis and disassembled as cells enter S phase.

It localises to the nucleus. Functionally, essential protein. Component of the origin recognition complex (ORC) that binds origins of replication. DNA-binding is ATP-dependent, however specific DNA sequences that define origins of replication have not been identified so far. ORC is required to assemble the pre-replication complex necessary to initiate DNA replication. This is Origin of replication complex subunit 2 from Oryza sativa subsp. indica (Rice).